The primary structure comprises 324 residues: Aprataxin (324 aa).

Residues Ser23–Val72 form the FHA-like domain. Positions Thr100–Pro160 are disordered. A compositionally biased stretch (polar residues) spans Arg111 to Val125. Residues Ser150–Leu255 enclose the HIT domain. Interaction with DNA substrate regions lie at residues Asp175–Lys179 and Ser237–Met238. Residues His240–His244 carry the Histidine triad motif motif. His242 acts as the Tele-AMP-histidine intermediate in catalysis. Residues Leu299 to His321 form a C2H2-type zinc finger.

It localises to the nucleus. The protein resides in the nucleoplasm. Its subcellular location is the nucleolus. The enzyme catalyses a 5'-end adenosine-5'-diphospho-5'-2'-deoxyribonucleoside-DNA + H2O = a 5'-end 5'-phospho-2'-deoxyribonucleoside-DNA + AMP + 2 H(+). It catalyses the reaction a 5'-end adenosine-5'-diphospho-5'-ribonucleoside-2'-deoxyribonucleotide-DNA + H2O = a 5'-end 5'-phospho-ribonucleoside-2'-deoxyribonucleotide-DNA + AMP + 2 H(+). The catalysed reaction is a 3'-end 2'-deoxyribonucleotide-3'-diphospho-5'-guanosine-DNA + H2O = a 3'-end 2'-deoxyribonucleotide 3'-phosphate-DNA + GMP + 2 H(+). Functionally, DNA-binding protein involved in single-strand DNA break repair, double-strand DNA break repair and base excision repair. Resolves abortive DNA ligation intermediates formed either at base excision sites, or when DNA ligases attempt to repair non-ligatable breaks induced by reactive oxygen species. Catalyzes the release of adenylate groups covalently linked to 5'-phosphate termini, resulting in the production of 5'-phosphate termini that can be efficiently rejoined. Also able to hydrolyze adenosine 5'-monophosphoramidate (AMP-NH(2)) and diadenosine tetraphosphate (AppppA), but with lower catalytic activity. Likewise, catalyzes the release of 3'-linked guanosine (DNAppG) and inosine (DNAppI) from DNA, but has higher specific activity with 5'-linked adenosine (AppDNA). The chain is Aprataxin (aptx) from Danio rerio (Zebrafish).